We begin with the raw amino-acid sequence, 40 residues long: Hemoglobin subunit alpha-2 (40 aa).

Residues 1–40 enclose the Globin domain; the sequence is VGPHLDDYGGEALHRNFEVYPQTKTYFPHFDASAGSNQLK.

It belongs to the globin family. In terms of assembly, heterotetramer of two alpha chains and two beta chains. Red blood cells.

In terms of biological role, involved in oxygen transport from the lung to the various peripheral tissues. This is Hemoglobin subunit alpha-2 from Saara hardwickii (Indian spiny-tailed lizard).